The chain runs to 206 residues: Ras-related protein Rab-18 (206 aa).

Met1 carries the post-translational modification N-acetylmethionine. Residues Ser17, Gly20, Lys21, Ser22, Ser23, Asp34, Pro35, Thr40, Gly66, Lys123, and Asp125 each coordinate GTP. Residue Ser22 coordinates Mg(2+). 2 consecutive short sequence motifs (switch) follow at residues 31-45 (DTFD…GVDF) and 63-80 (DTAG…YYRG). Mg(2+) is bound at residue Thr40. At Ser144 the chain carries Phosphoserine. Ala152 lines the GTP pocket. The S-palmitoyl cysteine moiety is linked to residue Cys199. A Cysteine methyl ester modification is found at Cys203. The S-geranylgeranyl cysteine moiety is linked to residue Cys203. The propeptide at 204–206 (SVL) is removed in mature form.

It belongs to the small GTPase superfamily. Rab family. Interacts (in GTP-bound form) with ZFYVE1. Interacts with ZW10 and this interaction is enhanced in the presence of ZFYVE1. Interacts with BSCL2. Mg(2+) serves as cofactor. In terms of tissue distribution, expression is high in the brain, moderate in the pituitary, and low in the liver. Detected in all tissues. Highly enriched on apical endocytic structures in polarized epithelial cells of kidney proximal tubules. Detected on both the apical and basolateral domains in epithelial cells of the intestine.

It localises to the endoplasmic reticulum membrane. The protein localises to the golgi apparatus. Its subcellular location is the cis-Golgi network membrane. The protein resides in the lipid droplet. It is found in the apical cell membrane. The catalysed reaction is GTP + H2O = GDP + phosphate + H(+). Its activity is regulated as follows. Regulated by guanine nucleotide exchange factor (GEF) RAB3GAP1-RAB3GAP2 complex at the cis-Golgi membrane which promotes the exchange of bound GDP for free GTP. Regulated by GTPase activating protein (GAP) TBC1D20 at the ER membrane which increases the GTP hydrolysis activity. Inhibited by GDP dissociation inhibitors (GDIs) which prevent Rab-GDP dissociation. The small GTPases Rab are key regulators of intracellular membrane trafficking, from the formation of transport vesicles to their fusion with membranes. Rabs cycle between an inactive GDP-bound form and an active GTP-bound form that is able to recruit to membranes different sets of downstream effectors directly responsible for vesicle formation, movement, tethering and fusion. RAB18 is required for the localization of ZFYVE1 to lipid droplets and for its function in mediating the formation of endoplasmic reticulum-lipid droplets (ER-LD) contacts. Also required for maintaining endoplasmic reticulum structure. Plays a role in apical endocytosis/recycling. Plays a key role in eye and brain development and neurodegeneration. The protein is Ras-related protein Rab-18 of Mus musculus (Mouse).